The primary structure comprises 145 residues: Selenoprotein M (145 aa).

The N-terminal stretch at 1-23 is a signal peptide; sequence MSLLLPPLALLLLLAALVAPATA. Catalysis depends on nucleophile residues C45 and U48. A cross-link (cysteinyl-selenocysteine (Cys-Sec)) is located at residues 45 to 48; sequence CGGU. U48 is a non-standard amino acid (selenocysteine).

It belongs to the selenoprotein M/F family. In terms of tissue distribution, widely expressed.

The protein resides in the cytoplasm. It is found in the perinuclear region. Its subcellular location is the endoplasmic reticulum. The protein localises to the golgi apparatus. In terms of biological role, may function as a thiol-disulfide oxidoreductase that participates in disulfide bond formation. The chain is Selenoprotein M from Homo sapiens (Human).